Here is a 125-residue protein sequence, read N- to C-terminus: Small ribosomal subunit protein uS12 (125 aa).

Residue aspartate 89 is modified to 3-methylthioaspartic acid. Residues 106–125 are disordered; sequence GVKDRKQSRSKYGAKRPKKA. Basic residues predominate over residues 113–125; that stretch reads SRSKYGAKRPKKA.

The protein belongs to the universal ribosomal protein uS12 family. In terms of assembly, part of the 30S ribosomal subunit. Contacts proteins S8 and S17. May interact with IF1 in the 30S initiation complex.

Functionally, with S4 and S5 plays an important role in translational accuracy. Its function is as follows. Interacts with and stabilizes bases of the 16S rRNA that are involved in tRNA selection in the A site and with the mRNA backbone. Located at the interface of the 30S and 50S subunits, it traverses the body of the 30S subunit contacting proteins on the other side and probably holding the rRNA structure together. The combined cluster of proteins S8, S12 and S17 appears to hold together the shoulder and platform of the 30S subunit. The chain is Small ribosomal subunit protein uS12 from Variovorax paradoxus (strain S110).